Here is a 634-residue protein sequence, read N- to C-terminus: Chaperone protein HtpG (634 aa).

An a; substrate-binding region spans residues 1-342 (MTVETDKQTL…SSDLSLNVSR (342 aa)). The interval 343-559 (EILQSGPVVD…QGDLGLQMRQ (217 aa)) is b. The c stretch occupies residues 560–634 (LLEASGQAVP…LNKLLLELSA (75 aa)).

It belongs to the heat shock protein 90 family. Homodimer.

It localises to the cytoplasm. Functionally, molecular chaperone. Has ATPase activity. This Xanthomonas axonopodis pv. citri (strain 306) protein is Chaperone protein HtpG.